Reading from the N-terminus, the 132-residue chain is Agouti-signaling protein (132 aa).

The first 22 residues, 1-22 (MDVTRLLLATLLVFLCFFTVYS), serve as a signal peptide directing secretion. An N-linked (GlcNAc...) asparagine glycan is attached at Asn-39. The disordered stretch occupies residues 62 to 88 (ISRKEAEKKRSSKKEASMKKVAQPRTP). Residues 63–79 (SRKEAEKKRSSKKEASM) are compositionally biased toward basic and acidic residues. 5 disulfides stabilise this stretch: Cys-93-Cys-108, Cys-100-Cys-114, Cys-107-Cys-125, Cys-111-Cys-132, and Cys-116-Cys-123. The 40-residue stretch at 93-132 (CVATRYSCKPPAPACCDPCASCQCRFFRSACSCRVLRLNC) folds into the Agouti domain.

The protein localises to the secreted. Functionally, involved in the regulation of melanogenesis. The binding of ASP to MC1R precludes alpha-MSH initiated signaling and thus blocks production of cAMP, leading to a down-regulation of eumelanogenesis (brown/black pigment) and thus increasing synthesis of pheomelanin (yellow/red pigment). The sequence is that of Agouti-signaling protein (ASIP) from Semnopithecus entellus (Northern plains gray langur).